A 439-amino-acid chain; its full sequence is Polygalacturonase QRT2 (439 aa).

The signal sequence occupies residues 1-21 (MYEKIIILSVFLLTFLPSCFS). Residues 43-69 (RQHQHGHNTRNSHLKNRHGYAPRSSPR) are disordered. The segment covering 44–62 (QHQHGHNTRNSHLKNRHGY) has biased composition (basic residues). 2 PbH1 repeats span residues 201-250 (CNNL…HVSG) and 251-272 (TQNILIQDSIVRTGDDCISIVS). D265 (proton donor) is an active-site residue. H288 is a catalytic residue. PbH1 repeat units follow at residues 304-325 (VSNVVVNKATLIGTTNGVRIKT) and 333-354 (AKNIIFQDIIMKNVTNPIIINQ).

The protein belongs to the glycosyl hydrolase 28 family. In terms of tissue distribution, expressed predominantly in roots with lower expression levels in rosette leaves, flower buds and siliques. Bearly detected in seeds. Found in flowers undergoing floral organ abscission. Also expressed early in anther development, at the time of microspore separation.

Its subcellular location is the secreted. The protein resides in the cell wall. It carries out the reaction (1,4-alpha-D-galacturonosyl)n+m + H2O = (1,4-alpha-D-galacturonosyl)n + (1,4-alpha-D-galacturonosyl)m.. Its function is as follows. Polygalacturonase required for cell type-specific pectin degradation to separate microspores. Involved in anther dehiscence and floral organ abscission. The protein is Polygalacturonase QRT2 (QRT2) of Arabidopsis thaliana (Mouse-ear cress).